We begin with the raw amino-acid sequence, 887 residues long: Alanine--tRNA ligase (887 aa).

Residues His-564, His-568, Cys-676, and His-680 each coordinate Zn(2+).

The protein belongs to the class-II aminoacyl-tRNA synthetase family. Requires Zn(2+) as cofactor.

The protein resides in the cytoplasm. The catalysed reaction is tRNA(Ala) + L-alanine + ATP = L-alanyl-tRNA(Ala) + AMP + diphosphate. Catalyzes the attachment of alanine to tRNA(Ala) in a two-step reaction: alanine is first activated by ATP to form Ala-AMP and then transferred to the acceptor end of tRNA(Ala). Also edits incorrectly charged Ser-tRNA(Ala) and Gly-tRNA(Ala) via its editing domain. This is Alanine--tRNA ligase from Agrobacterium fabrum (strain C58 / ATCC 33970) (Agrobacterium tumefaciens (strain C58)).